The primary structure comprises 144 residues: Large ribosomal subunit protein uL15 (144 aa).

The segment at 1–52 is disordered; sequence MRLNTISSAPGAKQAEKRVGRGIGSGWGKTCGRGHKGQKSRSGGFHKVGFEG. The span at 21–31 shows a compositional bias: gly residues; that stretch reads RGIGSGWGKTC.

This sequence belongs to the universal ribosomal protein uL15 family. In terms of assembly, part of the 50S ribosomal subunit.

In terms of biological role, binds to the 23S rRNA. The protein is Large ribosomal subunit protein uL15 of Nitrosococcus oceani (strain ATCC 19707 / BCRC 17464 / JCM 30415 / NCIMB 11848 / C-107).